Consider the following 453-residue polypeptide: Phosphoglucosamine mutase (453 aa).

The Phosphoserine intermediate role is filled by serine 105. Serine 105, aspartate 244, aspartate 246, and aspartate 248 together coordinate Mg(2+). A Phosphoserine modification is found at serine 105.

This sequence belongs to the phosphohexose mutase family. Requires Mg(2+) as cofactor. Post-translationally, activated by phosphorylation.

The catalysed reaction is alpha-D-glucosamine 1-phosphate = D-glucosamine 6-phosphate. In terms of biological role, catalyzes the conversion of glucosamine-6-phosphate to glucosamine-1-phosphate. This chain is Phosphoglucosamine mutase, found in Chromohalobacter salexigens (strain ATCC BAA-138 / DSM 3043 / CIP 106854 / NCIMB 13768 / 1H11).